The following is a 383-amino-acid chain: Probable L-tyrosine/L-aspartate decarboxylase (383 aa).

Lysine 227 bears the N6-(pyridoxal phosphate)lysine mark.

This sequence belongs to the group II decarboxylase family. MfnA subfamily. Pyridoxal 5'-phosphate is required as a cofactor.

The catalysed reaction is L-tyrosine + H(+) = tyramine + CO2. The enzyme catalyses L-aspartate + H(+) = beta-alanine + CO2. It functions in the pathway cofactor biosynthesis; methanofuran biosynthesis. Its pathway is cofactor biosynthesis; coenzyme A biosynthesis. In terms of biological role, catalyzes the decarboxylation of L-tyrosine to produce tyramine for methanofuran biosynthesis. Can also catalyze the decarboxylation of L-aspartate to produce beta-alanine for coenzyme A (CoA) biosynthesis. The protein is Probable L-tyrosine/L-aspartate decarboxylase of Methanothrix thermoacetophila (strain DSM 6194 / JCM 14653 / NBRC 101360 / PT) (Methanosaeta thermophila).